Here is a 742-residue protein sequence, read N- to C-terminus: Collectin-12 (742 aa).

The Cytoplasmic portion of the chain corresponds to 1 to 37 (MKDDFAEEEEVQSFGYKRFGIQEGTQCTKCKNNWALK). The chain crosses the membrane as a helical; Signal-anchor for type II membrane protein span at residues 38 to 58 (FSIVLLYILCALLTITVAILG). The Extracellular segment spans residues 59–742 (YKVVEKMDNV…EREAVPSSIL (684 aa)). Residue N67 is glycosylated (N-linked (GlcNAc...) asparagine). Residues 73–142 (ETSHQTYDNK…KDTLEKLQAN (70 aa)) are a coiled coil. Residues N159 and N168 are each glycosylated (N-linked (GlcNAc...) asparagine). The stretch at 205 to 254 (NLNNLNLTQVQQRNLISNLQQSVDDTSLAIQRIKNDFQNLQQVFLQAKKD) forms a coiled coil. N271 carries N-linked (GlcNAc...) asparagine glycosylation. The tract at residues 439–608 (TILQGPPGPR…TPASEVNGCP (170 aa)) is disordered. Collagen-like domains follow at residues 452–511 (GDRG…KGSR) and 527–586 (GPPG…PGPS). The span at 501–514 (SKGSQGPKGSRGSP) shows a compositional bias: low complexity. A compositionally biased stretch (pro residues) spans 516–532 (KPGPQGPSGDPGPPGPP). The segment covering 534-556 (KDGLPGPQGPPGFQGLQGTVGEP) has biased composition (low complexity). Over residues 571 to 585 (PGMPGPKGPPGPPGP) the composition is skewed to pro residues. Disulfide bonds link C607-C618, C635-C730, and C708-C722. The C-type lectin domain occupies 614 to 731 (FTDKCYYFSL…CDEINNFICE (118 aa)). 5 residues coordinate Ca(2+): F644, N646, E650, D670, and E674. Positions 691, 694, and 696 each coordinate a carbohydrate. 8 residues coordinate Ca(2+): Q694, D696, N697, E706, D707, N718, D719, and E731. E706 contributes to the a carbohydrate binding site. N718 and D719 together coordinate a carbohydrate.

As to quaternary structure, the extracellular domain forms a stable trimer. The extracellular domain interacts with fibrillar amyloid-beta peptide. Expressed in vascular endothelial cells in the heart, in perivascular macrophage and smooth muscle cells. Expressed in plaques-surrounding reactive astrocytes located in cerebral cortex and hippocampus and in leptomeningeal vessels showing characteristics of cerebral amyloid angiopathy (CAA) in a double transgenic mouse model of Alzheimer disease (at protein level). Strongly expressed in lung. Moderately expressed in heart, skeletal muscle, spleen, liver, brain, colon, testis, stomach and kidney. Expressed in neonatal astrocytes. Expressed in reactive astrocytes and vascular/perivascular cells in the brain of a double transgenic mouse model of Alzheimer disease.

It is found in the membrane. Scavenger receptor that displays several functions associated with host defense. Promotes binding and phagocytosis of Gram-positive, Gram-negative bacteria and yeast. Also binds to sialyl Lewis X or a trisaccharide and asialo-orosomucoid (ASOR). Mediates the recognition, internalization and degradation of oxidatively modified low density lipoprotein (oxLDL) by vascular endothelial cells. Binds to several carbohydrates including Gal-type ligands, D-galactose, L- and D-fucose, GalNAc, T and Tn antigens in a calcium-dependent manner and internalizes specifically GalNAc in nurse-like cells. This chain is Collectin-12 (Colec12), found in Mus musculus (Mouse).